We begin with the raw amino-acid sequence, 129 residues long: Ribulose bisphosphate carboxylase small subunit (129 aa).

This sequence belongs to the RuBisCO small chain family. As to quaternary structure, heterohexadecamer of 8 large and 8 small subunits.

Its function is as follows. RuBisCO catalyzes two reactions: the carboxylation of D-ribulose 1,5-bisphosphate, the primary event in carbon dioxide fixation, as well as the oxidative fragmentation of the pentose substrate. Both reactions occur simultaneously and in competition at the same active site. Although the small subunit is not catalytic it is essential for maximal activity. The protein is Ribulose bisphosphate carboxylase small subunit of Cereibacter sphaeroides (Rhodobacter sphaeroides).